Reading from the N-terminus, the 256-residue chain is Thiazole synthase (256 aa).

Lys96 acts as the Schiff-base intermediate with DXP in catalysis. 1-deoxy-D-xylulose 5-phosphate contacts are provided by residues Gly157, 183 to 184 (AG), and 205 to 206 (NT).

Belongs to the ThiG family. As to quaternary structure, homotetramer. Forms heterodimers with either ThiH or ThiS.

Its subcellular location is the cytoplasm. It catalyses the reaction [ThiS sulfur-carrier protein]-C-terminal-Gly-aminoethanethioate + 2-iminoacetate + 1-deoxy-D-xylulose 5-phosphate = [ThiS sulfur-carrier protein]-C-terminal Gly-Gly + 2-[(2R,5Z)-2-carboxy-4-methylthiazol-5(2H)-ylidene]ethyl phosphate + 2 H2O + H(+). It functions in the pathway cofactor biosynthesis; thiamine diphosphate biosynthesis. In terms of biological role, catalyzes the rearrangement of 1-deoxy-D-xylulose 5-phosphate (DXP) to produce the thiazole phosphate moiety of thiamine. Sulfur is provided by the thiocarboxylate moiety of the carrier protein ThiS. In vitro, sulfur can be provided by H(2)S. The polypeptide is Thiazole synthase (Clostridioides difficile (strain 630) (Peptoclostridium difficile)).